We begin with the raw amino-acid sequence, 280 residues long: Transcription factor HES-1 (280 aa).

Positions Met1–Lys44 are disordered. The span at Ser10–Val21 shows a compositional bias: low complexity. Residues Asp26 to Arg35 are compositionally biased toward basic and acidic residues. The 58-residue stretch at His34–Leu91 folds into the bHLH domain. In terms of domain architecture, Orange spans Tyr110–Leu143. 2 disordered regions span residues Gly157–Gly200 and Thr254–Asn280. Pro residues-rich tracts occupy residues Gln164–Gly174 and Phe181–Gly200. Residues Thr254–Ala271 are compositionally biased toward polar residues. The short motif at Trp275 to Trp278 is the WRPW motif element.

Transcription repression requires formation of a complex with a corepressor protein of the Groucho/TLE family. Interacts (via WPRW motif) with TLE1, and more weakly with TLE2. Interacts with HES6. Interacts with SIRT1. Interacts with an FA complex, composed of FANCA, FANCF, FANCG and FANCL, but not of FANCC, nor FANCE. In terms of processing, (Microbial infection) Ubiquitinated via human cytomegalovirus/HCMV protein IE1 that assembles a HES1 ubiquitination complex; leading to HES1 proteasomal degradation.

It localises to the nucleus. In terms of biological role, transcriptional repressor of genes that require a bHLH protein for their transcription. May act as a negative regulator of myogenesis by inhibiting the functions of MYOD1 and ASH1. Binds DNA on N-box motifs: 5'-CACNAG-3' with high affinity and on E-box motifs: 5'-CANNTG-3' with low affinity. May play a role in a functional FA core complex response to DNA cross-link damage, being required for the stability and nuclear localization of FA core complex proteins, as well as for FANCD2 monoubiquitination in response to DNA damage. The chain is Transcription factor HES-1 (HES1) from Homo sapiens (Human).